Reading from the N-terminus, the 1038-residue chain is Ubiquitin carboxyl-terminal hydrolase 36 (1038 aa).

2 disordered regions span residues 22–44 (LGGN…TNGS) and 107–148 (ANGH…PKPK). The segment covering 23-44 (GGNSSAGSSTDQAKSGEDTNGS) has biased composition (polar residues). Positions 172–480 (TGMINVGNTC…NAYIMFFELD (309 aa)) constitute a USP domain. Cysteine 181 functions as the Nucleophile in the catalytic mechanism. Histidine 439 serves as the catalytic Proton acceptor. 4 disordered regions span residues 487-794 (PAAN…SKTG), 818-881 (GSPV…SNGS), 912-985 (LLVD…YNQN), and 1000-1038 (RFGG…QQQT). Composition is skewed to low complexity over residues 502–517 (STTP…PSPT), 546–559 (QQNQ…LQLG), and 587–606 (NGNK…KSIN). 2 positions are modified to phosphoserine: serine 513 and serine 515. The segment covering 629 to 641 (TTAQLPSMPNMTE) has biased composition (polar residues). Phosphothreonine occurs at positions 658 and 662. 2 positions are modified to phosphoserine: serine 672 and serine 674. The segment covering 703–728 (TNGHSKTNGSHTNGSASSSVHVNNSK) has biased composition (polar residues). Basic and acidic residues predominate over residues 729-746 (QKTDAIDEIFKSLKKSAD). Phosphoserine is present on serine 747. Residues 747-756 (SDEDDDEEEP) show a composition bias toward acidic residues. A compositionally biased stretch (low complexity) spans 766–776 (PQKQSQSQSKA). Pro residues predominate over residues 777–786 (PPSPKTPPSP). At serine 779 the chain carries Phosphoserine. Phosphothreonine is present on threonine 782. A phosphoserine mark is found at serine 785 and serine 819. Threonine 825 carries the post-translational modification Phosphothreonine. The span at 832 to 844 (NPFSSSKPSTDSP) shows a compositional bias: polar residues. Position 843 is a phosphoserine (serine 843). Threonine 846 carries the phosphothreonine modification. Over residues 859–881 (ALKSHQQPRVGNGYQSNATSNGS) the composition is skewed to polar residues. The segment covering 912-923 (LLVDAREQRQRD) has biased composition (basic and acidic residues). Residues 942–953 (SGSAKGNNASNS) are compositionally biased toward low complexity.

The protein belongs to the peptidase C19 family. In terms of assembly, interacts with atms/PAF1, but not with CycT. Interacts (via C-terminus) with imd (via N-terminus).

The protein resides in the nucleus. The protein localises to the nucleolus. It localises to the cytoplasm. It catalyses the reaction Thiol-dependent hydrolysis of ester, thioester, amide, peptide and isopeptide bonds formed by the C-terminal Gly of ubiquitin (a 76-residue protein attached to proteins as an intracellular targeting signal).. Hydrolase that deubiquitinates polyubiquitinated target proteins including imd. Required for preventing the constitutive activation of the imd/NF-kappa-B (Imd) signaling cascade under unchalleneged conditions. Deubiquitinates imd linked 'Lys-63' chains which leads its proteasomal degradation and consequently down-regulation of the Imd signaling cascade. Removal of the activating 'Lys-63'-linked chains is likely to enable their replacement with 'Lys-48'-linked chains which act as 'tags' the for proteasomal degradation of imd. Required for maintaining multiple types of adult stem cells, including male and female germline, epithelial follicle cell and intestinal stem cells. May function as a transcriptional repressor by continually deubiquiting histone H2B at the promoters of genes critical for cellular differentiation, thereby preventing histone H3 'Lys-4' trimethylation (H3K4me3). Controls selective autophagy activation by ubiquitinated proteins. This is Ubiquitin carboxyl-terminal hydrolase 36 (scny) from Drosophila melanogaster (Fruit fly).